Consider the following 473-residue polypeptide: Photosystem II CP43 reaction center protein (473 aa).

Residues 1 to 14 (MKTLYSLRRSYPVE) constitute a propeptide that is removed on maturation. An N-acetylthreonine modification is found at T15. A Phosphothreonine modification is found at T15. 5 helical membrane-spanning segments follow: residues 69-93 (LFEV…PHLA), 134-155 (LIGP…KDRN), 178-200 (KALY…RKIT), 255-275 (KPFA…LSYS), and 291-312 (WFNN…ASQA). Residue E367 coordinates [CaMn4O5] cluster. The chain crosses the membrane as a helical span at residues 447–471 (RARAAAAGFEKGIDRDFEPVLSMTP).

Belongs to the PsbB/PsbC family. PsbC subfamily. As to quaternary structure, PSII is composed of 1 copy each of membrane proteins PsbA, PsbB, PsbC, PsbD, PsbE, PsbF, PsbH, PsbI, PsbJ, PsbK, PsbL, PsbM, PsbT, PsbX, PsbY, PsbZ, Psb30/Ycf12, at least 3 peripheral proteins of the oxygen-evolving complex and a large number of cofactors. It forms dimeric complexes. Binds multiple chlorophylls and provides some of the ligands for the Ca-4Mn-5O cluster of the oxygen-evolving complex. It may also provide a ligand for a Cl- that is required for oxygen evolution. PSII binds additional chlorophylls, carotenoids and specific lipids. is required as a cofactor.

The protein resides in the plastid. It localises to the chloroplast thylakoid membrane. In terms of biological role, one of the components of the core complex of photosystem II (PSII). It binds chlorophyll and helps catalyze the primary light-induced photochemical processes of PSII. PSII is a light-driven water:plastoquinone oxidoreductase, using light energy to abstract electrons from H(2)O, generating O(2) and a proton gradient subsequently used for ATP formation. The polypeptide is Photosystem II CP43 reaction center protein (Pinus koraiensis (Korean pine)).